A 718-amino-acid polypeptide reads, in one-letter code: Polyribonucleotide nucleotidyltransferase (718 aa).

Mg(2+)-binding residues include aspartate 496 and aspartate 502. A KH domain is found at 563–622 (PRLLTIKIDSDMIGLVIGPGGKTIKGITEETGAKIDIEDDGTVTISAVDENKAKRARNII). Residues 632-700 (GDVYAGRITR…NKGRINLTRL (69 aa)) enclose the S1 motif domain.

It belongs to the polyribonucleotide nucleotidyltransferase family. It depends on Mg(2+) as a cofactor.

The protein localises to the cytoplasm. The enzyme catalyses RNA(n+1) + phosphate = RNA(n) + a ribonucleoside 5'-diphosphate. In terms of biological role, involved in mRNA degradation. Catalyzes the phosphorolysis of single-stranded polyribonucleotides processively in the 3'- to 5'-direction. This is Polyribonucleotide nucleotidyltransferase from Nostoc punctiforme (strain ATCC 29133 / PCC 73102).